The sequence spans 346 residues: Holliday junction branch migration complex subunit RuvB (346 aa).

The segment at 1-182 (MSEPARLISP…FGIPVRLSFY (182 aa)) is large ATPase domain (RuvB-L). Residues Leu21, Arg22, Gly63, Lys66, Thr67, Thr68, 129–131 (EDF), Arg172, Tyr182, and Arg219 each bind ATP. Thr67 is a binding site for Mg(2+). The tract at residues 183-253 (TVEELELIVR…IADEALTRLL (71 aa)) is small ATPAse domain (RuvB-S). Positions 256 to 346 (NVGFDQLDKR…AQFRLFQEDD (91 aa)) are head domain (RuvB-H). DNA is bound by residues Arg292, Arg311, and Arg316.

This sequence belongs to the RuvB family. As to quaternary structure, homohexamer. Forms an RuvA(8)-RuvB(12)-Holliday junction (HJ) complex. HJ DNA is sandwiched between 2 RuvA tetramers; dsDNA enters through RuvA and exits via RuvB. An RuvB hexamer assembles on each DNA strand where it exits the tetramer. Each RuvB hexamer is contacted by two RuvA subunits (via domain III) on 2 adjacent RuvB subunits; this complex drives branch migration. In the full resolvosome a probable DNA-RuvA(4)-RuvB(12)-RuvC(2) complex forms which resolves the HJ.

The protein localises to the cytoplasm. It catalyses the reaction ATP + H2O = ADP + phosphate + H(+). Functionally, the RuvA-RuvB-RuvC complex processes Holliday junction (HJ) DNA during genetic recombination and DNA repair, while the RuvA-RuvB complex plays an important role in the rescue of blocked DNA replication forks via replication fork reversal (RFR). RuvA specifically binds to HJ cruciform DNA, conferring on it an open structure. The RuvB hexamer acts as an ATP-dependent pump, pulling dsDNA into and through the RuvAB complex. RuvB forms 2 homohexamers on either side of HJ DNA bound by 1 or 2 RuvA tetramers; 4 subunits per hexamer contact DNA at a time. Coordinated motions by a converter formed by DNA-disengaged RuvB subunits stimulates ATP hydrolysis and nucleotide exchange. Immobilization of the converter enables RuvB to convert the ATP-contained energy into a lever motion, pulling 2 nucleotides of DNA out of the RuvA tetramer per ATP hydrolyzed, thus driving DNA branch migration. The RuvB motors rotate together with the DNA substrate, which together with the progressing nucleotide cycle form the mechanistic basis for DNA recombination by continuous HJ branch migration. Branch migration allows RuvC to scan DNA until it finds its consensus sequence, where it cleaves and resolves cruciform DNA. The chain is Holliday junction branch migration complex subunit RuvB from Rhizobium etli (strain CIAT 652).